The chain runs to 134 residues: Small ribosomal subunit protein uS8c (134 aa).

It belongs to the universal ribosomal protein uS8 family. Part of the 30S ribosomal subunit.

It is found in the plastid. In terms of biological role, one of the primary rRNA binding proteins, it binds directly to 16S rRNA central domain where it helps coordinate assembly of the platform of the 30S subunit. The polypeptide is Small ribosomal subunit protein uS8c (rps8) (Cuscuta gronovii (Common dodder)).